A 132-amino-acid polypeptide reads, in one-letter code: Intraflagellar transport protein 20 homolog B (132 aa).

Positions 87-112 (EAQQQQLYALIAEKKMQLERYRIEYD) form a coiled coil.

The protein resides in the golgi apparatus. The protein localises to the cis-Golgi network. It localises to the cytoplasm. Its subcellular location is the cytoskeleton. It is found in the microtubule organizing center. The protein resides in the centrosome. The protein localises to the centriole. It localises to the cell projection. Its subcellular location is the cilium. Functionally, involved in ciliary process assembly. May play a role in the trafficking of ciliary membrane proteins from the Golgi complex to the cilium. Regulates the platelet-derived growth factor receptor-alpha (PDGFRA) signaling pathway. Plays an important role in spermatogenesis, particularly spermiogenesis, when germ cells form flagella. This Xenopus laevis (African clawed frog) protein is Intraflagellar transport protein 20 homolog B (ift20-b).